A 466-amino-acid polypeptide reads, in one-letter code: Methylenetetrahydrofolate--tRNA-(uracil-5-)-methyltransferase TrmFO (466 aa).

Residue 10–15 coordinates FAD; that stretch reads GGGLAG.

Belongs to the MnmG family. TrmFO subfamily. Requires FAD as cofactor.

The protein localises to the cytoplasm. The catalysed reaction is uridine(54) in tRNA + (6R)-5,10-methylene-5,6,7,8-tetrahydrofolate + NADH + H(+) = 5-methyluridine(54) in tRNA + (6S)-5,6,7,8-tetrahydrofolate + NAD(+). It catalyses the reaction uridine(54) in tRNA + (6R)-5,10-methylene-5,6,7,8-tetrahydrofolate + NADPH + H(+) = 5-methyluridine(54) in tRNA + (6S)-5,6,7,8-tetrahydrofolate + NADP(+). Its function is as follows. Catalyzes the folate-dependent formation of 5-methyl-uridine at position 54 (M-5-U54) in all tRNAs. The sequence is that of Methylenetetrahydrofolate--tRNA-(uracil-5-)-methyltransferase TrmFO from Phenylobacterium zucineum (strain HLK1).